The following is a 30-amino-acid chain: Dermaseptin-3.4TR (30 aa).

As to expression, expressed by the skin glands.

It is found in the secreted. Has antimicrobial activity. This Phyllomedusa trinitatis (Trinidad leaf frog) protein is Dermaseptin-3.4TR.